Reading from the N-terminus, the 603-residue chain is Multicopper oxidase MCE (603 aa).

The signal sequence occupies residues 1-21 (MNTFICSALICLSWLPGFIQA). The region spanning 30–144 (ITYAKGAPDG…YGALWIRPKE (115 aa)) is the Plastocyanin-like 1 domain. An N-linked (GlcNAc...) asparagine glycan is attached at N75. Cu cation is bound by residues H79, H81, H123, and H125. 10 N-linked (GlcNAc...) asparagine glycosylation sites follow: N155, N180, N235, N256, N272, N275, N388, N394, N413, and N455. Residues 173–353 (LIVSDWSNFT…TPGDYTIRLP (181 aa)) enclose the Plastocyanin-like 2 domain. Residues 450–581 (LLYNPNSTAA…GGMAGVIMDG (132 aa)) form the Plastocyanin-like 3 domain. Cu cation is bound at residue H495. N-linked (GlcNAc...) asparagine glycosylation is found at N512 and N595.

It belongs to the multicopper oxidase family.

The catalysed reaction is 4 monapinone A + O2 = 2 dinapinone A + 2 H2O. It catalyses the reaction 4 monapinone E + O2 = 2 dinapinone E + 2 H2O. It participates in secondary metabolite biosynthesis. Multicopper oxidase; part of the gene cluster that mediates the biosynthesis of dinapinones DPA1 (or (M)-DPA) and DPA2 (or (P)-DPA), biaryl dihydronaphthopyranones that act in concert as inhibitors of triacylglycerol accumulation in mammalian cells. The first step in the pathway corresponds to the biosynthesis of dihydroxy-decanoyl-CoA by the fungal type I fatty acid synthase (formed by ORF4 and ORF5). The cluster-specific polyketide synthase (ORF7) then accepts and extends dihydroxy-decanoyl-CoA with 6 malonyl-CoA moieties and cyclizes the molecule to produce a putative polyhydroxynaphthopyranone intermediate, which is further methylated by the cluster-specific methyltransferase (ORF1) at 7-OH to produce monapinone A (MPA). MCE catalyzes the regioselective biaryl coupling of monapinone A (MPA) at the 8,8'-positions to afford dimeric atropisomers DPA1 and DPA2 in a ratio of approximately 1:2.5. Monapinone E (MPE) also appears to be a substrate for MCE and provides the atropisomers dinapinones DPE1 (or (M)-DPE) and DPE2 (or (P)-DPE). This is Multicopper oxidase MCE from Talaromyces pinophilus (Penicillium pinophilum).